Consider the following 271-residue polypeptide: Probable diacyglycerol O-acyltransferase tgs3 (271 aa).

Belongs to the long-chain O-acyltransferase family.

The enzyme catalyses an acyl-CoA + a 1,2-diacyl-sn-glycerol = a triacyl-sn-glycerol + CoA. The protein operates within glycerolipid metabolism; triacylglycerol biosynthesis. Catalyzes the terminal and only committed step in triacylglycerol synthesis by using diacylglycerol and fatty acyl CoA as substrates. Required for storage lipid synthesis. In Mycobacterium tuberculosis (strain CDC 1551 / Oshkosh), this protein is Probable diacyglycerol O-acyltransferase tgs3 (tgs3).